Consider the following 371-residue polypeptide: Neuropeptide Y receptor type 6 (371 aa).

Over 1-31 (MEVSLNDPASNKTSAKSNSSAFFYFESCQSP) the chain is Extracellular. Residues asparagine 11 and asparagine 18 are each glycosylated (N-linked (GlcNAc...) asparagine). Residues 32 to 52 (SLALLLLLIAYTVVLIMGICG) traverse the membrane as a helical segment. The Cytoplasmic segment spans residues 53–72 (NLSLITIIFKKQREAQNVTN). The helical transmembrane segment at 73–93 (ILIANLSLSDILVCVMCIPFT) threads the bilayer. At 94 to 111 (AIYTLMDRWIFGNTMCKL) the chain is on the extracellular side. Cysteine 109 and cysteine 196 are disulfide-bonded. A helical membrane pass occupies residues 112-132 (TSYVQSVSISVSIFSLVLIAI). The Cytoplasmic portion of the chain corresponds to 133-150 (ERYQLIVNPRGWKPSASH). Residues 151 to 171 (AYWGIMLIWLFSLLLSIPLLL) form a helical membrane-spanning segment. Over 172-213 (SYHLTDEPFRNLSLPTDLYSHHVVCVEHWPSKTNQLLYSTSL) the chain is Extracellular. N-linked (GlcNAc...) asparagine glycosylation occurs at asparagine 182. Residues 214–234 (IMLQYFVPLGFMFICYLKIVI) form a helical membrane-spanning segment. Residues 235-263 (CLHKRNSKIDRRRENESRLTENKRINTML) lie on the Cytoplasmic side of the membrane. A helical membrane pass occupies residues 264-284 (ISIVVTFAACWLPLNTFNVIF). The Extracellular portion of the chain corresponds to 285–297 (DWYHEVLMSCHHD). The chain crosses the membrane as a helical span at residues 298 to 318 (LVFAICHLVAMVSTCINPLFY). The Cytoplasmic portion of the chain corresponds to 319 to 371 (GFLNRNFQKDLVVLIHHCLCFALRERYENIAISTLHTDESKGSLRVAHIPAGI). A lipid anchor (S-palmitoyl cysteine) is attached at cysteine 336.

This sequence belongs to the G-protein coupled receptor 1 family. Expressed in hippocampus, striatum, hypothalamus, cerebellum, small intestine, colon and adrenal gland.

Its subcellular location is the cell membrane. In terms of biological role, receptor for neuropeptide Y and peptide YY. The activity of this receptor is mediated by G proteins that inhibit adenylate cyclase activity. The chain is Neuropeptide Y receptor type 6 (NPY6R) from Oryctolagus cuniculus (Rabbit).